The primary structure comprises 407 residues: tRNA pseudouridine synthase 4 (407 aa).

Positions 83 to 105 (FRPAPPHPNDRNRRRRKSNRLPD) are disordered. Aspartate 115 (nucleophile) is an active-site residue. The disordered stretch occupies residues 274-298 (TEQDINPQDGDEKINAKSPTTNSVT). Serine 291 is modified (phosphoserine). Threonine 293 carries the post-translational modification Phosphothreonine. Position 296 is a phosphoserine (serine 296). At threonine 406 the chain carries Phosphothreonine.

Belongs to the pseudouridine synthase TruB family.

Its subcellular location is the nucleus. It is found in the mitochondrion. The catalysed reaction is uridine(55) in tRNA = pseudouridine(55) in tRNA. It catalyses the reaction a uridine in mRNA = a pseudouridine in mRNA. In terms of biological role, responsible for synthesis of pseudouridine from uracil-55 in the psi GC loop of transfer RNAs. Also catalyzes pseudouridylation of mRNAs with the consensus sequence 5'-GGUUCRA-3'. The polypeptide is tRNA pseudouridine synthase 4 (Schizosaccharomyces pombe (strain 972 / ATCC 24843) (Fission yeast)).